Reading from the N-terminus, the 354-residue chain is Protein RecA (354 aa).

65-72 (GPESSGKT) contributes to the ATP binding site.

It belongs to the RecA family.

The protein resides in the cytoplasm. Functionally, can catalyze the hydrolysis of ATP in the presence of single-stranded DNA, the ATP-dependent uptake of single-stranded DNA by duplex DNA, and the ATP-dependent hybridization of homologous single-stranded DNAs. It interacts with LexA causing its activation and leading to its autocatalytic cleavage. The sequence is that of Protein RecA from Pseudomonas syringae pv. syringae (strain B728a).